Consider the following 1832-residue polypeptide: Putative transcription factor capicua (1832 aa).

Phosphoserine occurs at positions 41 and 49. Disordered regions lie at residues 66-121 (ANQS…EVGS), 135-227 (STVG…AHPH), 323-353 (QQQQ…NHNN), 389-427 (NQRQ…AAMR), 444-493 (DGAA…IRRP), 563-619 (DRRK…GGQG), 690-739 (RERV…SGGE), 784-845 (QPTG…VSAP), 874-938 (PMHH…EDDE), 1069-1105 (TSTL…TISC), 1151-1178 (GQDE…EQVT), 1457-1602 (DGGM…STAA), 1632-1668 (QPED…VQKL), 1701-1733 (LESS…HRKV), and 1789-1817 (ASCT…SSTS). The span at 96–121 (NANNNSSNNNTSSSNNNNNSNWEVGS) shows a compositional bias: low complexity. Residues 172–186 (PPPPPPASLPAPSAP) are compositionally biased toward pro residues. Low complexity-rich tracts occupy residues 187 to 203 (PTSG…HATS), 211 to 223 (QQQH…HQQQ), and 323 to 342 (QQQQ…QQQQ). Residues 397–408 (EEPDDQLDDDVF) are compositionally biased toward acidic residues. Polar residues predominate over residues 409-422 (ETTTPGISANSKKQ). Over residues 446–484 (AAGAPATSAAKRRSQSLSALQQQQQQQQQAGAAGTAAGQ) the composition is skewed to low complexity. Positions 490–558 (IRRPMNAFMI…AHFKLHPEWK (69 aa)) form a DNA-binding region, HMG box. Positions 610 to 619 (GGSGSCGGQG) are enriched in gly residues. The tract at residues 834–1832 (GSASGGGVVS…TSAADVFQYY (999 aa)) is interaction with gro. The span at 903 to 914 (ESSEKDKPALDD) shows a compositional bias: basic and acidic residues. The segment covering 915–938 (QERDEVEEEDEDEEDDDEDDEDDE) has biased composition (acidic residues). A compositionally biased stretch (polar residues) spans 1078 to 1091 (NPANNEAPNKFSNF). Over residues 1092–1105 (PTQHQPTTTTTISC) the composition is skewed to low complexity. Residues 1462–1471 (GCASAAASGG) are compositionally biased toward low complexity. Residues 1503–1525 (LSQSKSESNVSFGANLGASNGQH) are compositionally biased toward polar residues. Residues 1547 to 1589 (NSSNLSSALPTPTSSTTTPNSDEQLPLTPTTSSSNSNLNQQQP) are compositionally biased toward low complexity. T1716 carries the phosphothreonine modification. The segment covering 1724 to 1733 (DASEKGHRKV) has biased composition (basic and acidic residues). Over residues 1789–1799 (ASCTPHSAGPN) the composition is skewed to polar residues. The segment covering 1800–1817 (TPSDSNSSSTTLSASSTS) has biased composition (low complexity).

In terms of assembly, interacts with gro. As to expression, expressed in the central region of embryos. Also expressed in ovarian follicle cells, the wing imaginal disks and the wing pouch.

Its subcellular location is the nucleus. In terms of biological role, transcriptional repressor required for the specification of numerous cell types during embryonic development. Required for terminal patterning of early embryos. May associate with gro to repress tll and hkb, restricting their expression to embryonic terminal poles where they initiate correct development of head and tail structures. Required for dorsoventral patterning of oocytes and early embryos. Cooperates with dl to repress zen and other dorsal specific genes within the embryo and promotes expression of the ventralizing factor pip in ovarian follicle cells. Required during wing development for the specification of intervein areas, where it mediates localized repression of vein specific genes such as aos, dpp and vvl. This chain is Putative transcription factor capicua (cic), found in Drosophila melanogaster (Fruit fly).